The chain runs to 207 residues: Large ribosomal subunit protein uL4 (207 aa).

The tract at residues 48-70 (KAQKTRSEVSGGGAKPWRQKGTG) is disordered.

This sequence belongs to the universal ribosomal protein uL4 family. Part of the 50S ribosomal subunit.

One of the primary rRNA binding proteins, this protein initially binds near the 5'-end of the 23S rRNA. It is important during the early stages of 50S assembly. It makes multiple contacts with different domains of the 23S rRNA in the assembled 50S subunit and ribosome. Functionally, forms part of the polypeptide exit tunnel. The chain is Large ribosomal subunit protein uL4 from Francisella tularensis subsp. mediasiatica (strain FSC147).